Reading from the N-terminus, the 478-residue chain is Catalase easC (478 aa).

Residue histidine 54 is part of the active site. Heme is bound at residue tyrosine 343. Positions valine 459–leucine 478 are disordered.

Belongs to the catalase family. Heme serves as cofactor.

The protein operates within alkaloid biosynthesis; ergot alkaloid biosynthesis. Functionally, catalase; part of the gene cluster that mediates the biosynthesis of fungal ergot alkaloid. DmaW catalyzes the first step of ergot alkaloid biosynthesis by condensing dimethylallyl diphosphate (DMAP) and tryptophan to form 4-dimethylallyl-L-tryptophan. The second step is catalyzed by the methyltransferase easF that methylates 4-dimethylallyl-L-tryptophan in the presence of S-adenosyl-L-methionine, resulting in the formation of 4-dimethylallyl-L-abrine. The catalase easC and the FAD-dependent oxidoreductase easE then transform 4-dimethylallyl-L-abrine to chanoclavine-I which is further oxidized by easD in the presence of NAD(+), resulting in the formation of chanoclavine-I aldehyde. Chanoclavine-I aldehyde is the precursor of ergoamides and ergopeptines in Clavicipitaceae, and clavine-type alcaloids such as fumiclavine in Trichocomaceae. However, the metabolites downstream of chanoclavine-I aldehyde in Arthrodermataceae have not been identified yet. The sequence is that of Catalase easC from Trichophyton verrucosum (strain HKI 0517).